Consider the following 271-residue polypeptide: Ribosomal RNA small subunit methyltransferase A (271 aa).

Positions 18, 20, 45, 66, 91, and 112 each coordinate S-adenosyl-L-methionine.

Belongs to the class I-like SAM-binding methyltransferase superfamily. rRNA adenine N(6)-methyltransferase family. RsmA subfamily.

It is found in the cytoplasm. It carries out the reaction adenosine(1518)/adenosine(1519) in 16S rRNA + 4 S-adenosyl-L-methionine = N(6)-dimethyladenosine(1518)/N(6)-dimethyladenosine(1519) in 16S rRNA + 4 S-adenosyl-L-homocysteine + 4 H(+). In terms of biological role, specifically dimethylates two adjacent adenosines (A1518 and A1519) in the loop of a conserved hairpin near the 3'-end of 16S rRNA in the 30S particle. May play a critical role in biogenesis of 30S subunits. The chain is Ribosomal RNA small subunit methyltransferase A from Vibrio cholerae serotype O1 (strain ATCC 39315 / El Tor Inaba N16961).